A 149-amino-acid polypeptide reads, in one-letter code: Urease accessory protein UreE (149 aa).

This sequence belongs to the UreE family.

It localises to the cytoplasm. Involved in urease metallocenter assembly. Binds nickel. Probably functions as a nickel donor during metallocenter assembly. The protein is Urease accessory protein UreE of Ureaplasma parvum serovar 3 (strain ATCC 700970).